A 310-amino-acid polypeptide reads, in one-letter code: Small ribosomal subunit protein uS2 (310 aa).

A compositionally biased stretch (basic and acidic residues) spans 249-272 (WERDLLEGEKAEKKDDAEAAEKPA). Residues 249 to 310 (WERDLLEGEK…EAPAADAEQA (62 aa)) form a disordered region. Low complexity predominate over residues 273 to 310 (EAPAAEAPAAEAAEAPAAEAAPAEEPAAEAPAADAEQA).

Belongs to the universal ribosomal protein uS2 family.

This is Small ribosomal subunit protein uS2 (rpsB) from Streptomyces coelicolor (strain ATCC BAA-471 / A3(2) / M145).